The primary structure comprises 466 residues: MDFNKENINMVDAKKAKKTVVATGIGNAMEWFDFGVYAYTTAYIGANFFSPVENADIRQMLTFAALAIAFLLRPIGGVVFGIIGDKYGRKVVLTSTIILMAFSTLTIGLLPSYDQIGLWAPILLLLARVLQGFSTGGEYAGAMTYVAESSPDKRRNSLGSGLEIGTLSGYIAASIMIAVLTFFLTDEQMASFGWRIPFLLGLFLGLFGLYLRRKLEESPVFENDVATQPERDNINFLQIIRFYYKDIFVCFVAVVFFNVTNYMVTAYLPTYLEQVIKLDATTTSVLITCVMAIMIPLALMFGKLADKIGEKKVFLIGTGGLTLFSIIAFMLLHSQSFVVIVIGIFILGFFLSTYEATMPGSLPTMFYSHIRYRTLSVTFNISVSIFGGTTPLVATWLVTKTGDPLAPAYYLTAISVIGFLVITFLHLSTAGKSLKGSYPNVDNEQDRAYYAEHPKEALWWVKERKN.

A run of 12 helical transmembrane segments spans residues 20 to 42 (VVAT…YTTA), 63 to 83 (FAAL…FGII), 91 to 111 (VVLT…GLLP), 116 to 136 (IGLW…FSTG), 164 to 184 (IGTL…TFFL), 191 to 211 (SFGW…GLYL), 247 to 267 (IFVC…VTAY), 285 to 305 (VLIT…GKLA), 313 to 332 (VFLI…FMLL), 337 to 354 (FVVI…LSTY), 377 to 397 (VTFN…ATWL), and 405 to 425 (LAPA…ITFL).

Belongs to the major facilitator superfamily. Metabolite:H+ Symporter (MHS) family (TC 2.A.1.6) family.

Its subcellular location is the cell membrane. Its function is as follows. May be a proton symporter involved in the uptake of osmolytes such as proline and glycine betaine. The polypeptide is Putative proline/betaine transporter (proP) (Staphylococcus aureus (strain Mu3 / ATCC 700698)).